The sequence spans 795 residues: Levansucrase (795 aa).

An N-terminal signal peptide occupies residues 1 to 36 (METKVRKKMYKKGKFWVVATITTAMLTGIGLSSVQA). 2 stretches are compositionally biased toward polar residues: residues 42 to 66 (TQVS…SAAE) and 112 to 130 (QAAT…GQTN). Disordered regions lie at residues 42 to 83 (TQVS…NPAA) and 103 to 138 (ESKA…ATKE). Positions 245, 246, and 315 each coordinate sucrose. D246 serves as the catalytic Nucleophile. Residue D394 participates in Ca(2+) binding. Sucrose contacts are provided by R399 and D400. The Ca(2+) site is built by Q425, N464, and D496. E497 is a binding site for sucrose. The active-site Proton donor/acceptor is E499. Residue R517 coordinates sucrose. The helical transmembrane segment at 774-794 (GNSFFAALLALFSAFCVSIGF) threads the bilayer.

Belongs to the glycosyl hydrolase 68 family.

It is found in the cell membrane. The protein resides in the cell surface. It catalyses the reaction [6)-beta-D-fructofuranosyl-(2-&gt;](n) alpha-D-glucopyranoside + sucrose = [6)-beta-D-fructofuranosyl-(2-&gt;](n+1) alpha-D-glucopyranoside + D-glucose. Its activity is regulated as follows. Ca(2+) may play an important structural role and promote stability of levansucrase. In terms of biological role, catalyzes the synthesis of levan, a fructose polymer, by transferring the fructosyl moiety from sucrose to a growing acceptor molecule. Also displays sucrose hydrolase activity. The sequence is that of Levansucrase from Streptococcus mutans serotype c (strain ATCC 700610 / UA159).